The sequence spans 456 residues: Mitochondrial import inner membrane translocase subunit TIM50 (456 aa).

The N-terminal 22 residues, 1 to 22 (MSLSKLSQKCFSRHHARTFIRF), are a transit peptide targeting the mitochondrion. Residues 23 to 171 (SSSDFQSLLG…RRKRMERNTR (149 aa)) are Mitochondrial matrix-facing. Disordered regions lie at residues 101–120 (ETEK…AIDE) and 132–165 (EEAA…RRKR). A compositionally biased stretch (polar residues) spans 137–153 (SKTSAPSGSSGDNNDQP). The helical transmembrane segment at 172–192 (IGGYVLLGGSVIGFISFCFYY) threads the bilayer. The Mitochondrial intermembrane portion of the chain corresponds to 193 to 456 (GRAQRDEAGN…LFGFRRHASA (264 aa)). Positions 247 to 391 (YLQPKYTIVI…VDLAELLKTI (145 aa)) constitute an FCP1 homology domain.

It belongs to the TIM50 family. As to quaternary structure, component of the TIM23 complex at least composed of tim-23, tim-17 and tim-50.

Its subcellular location is the mitochondrion inner membrane. Its function is as follows. Essential component of the TIM23 complex, a complex that mediates the translocation of transit peptide-containing proteins across the mitochondrial inner membrane. This Caenorhabditis briggsae protein is Mitochondrial import inner membrane translocase subunit TIM50 (scpl-4).